The following is a 517-amino-acid chain: Protein IQ-DOMAIN 13 (517 aa).

The interval 1–11 is calmodulin-binding; sequence MGKKGSWFSAI. 2 disordered regions span residues 1–60 and 81–147; these read MGKK…FLPI and VFRP…PRAV. Basic residues predominate over residues 40–49; it reads KKKKGFGKKL. The segment covering 89 to 99 has biased composition (polar residues); it reads DRANSSSTSVA. Positions 134–144 are enriched in pro residues; the sequence is PKPPSPKPPSP. IQ domains are found at residues 168 to 196 and 197 to 218; these read KNAYAIKIQAAFRGYMARRSFRALKGLVR and LQGVVRGHSVKRQTMNAMKYMQ. Disordered regions lie at residues 324-407 and 425-452; these read QPFR…LTSC and KLRANSNPKERMDRTPVSTNEKRRSSFP. Residues 328–342 are compositionally biased toward low complexity; it reads LTPTRPSLSPQPQSS. Residues 343–367 show a composition bias toward polar residues; the sequence is NQNHFRLNNSFDTSTPNSSKSTFVT. Basic and acidic residues predominate over residues 432–448; sequence PKERMDRTPVSTNEKRR.

It belongs to the IQD family. In terms of assembly, binds to multiple calmodulin (CaM) in the presence of Ca(2+) and CaM-like proteins. As to expression, expressed in vessels of roots, cotyledons and leaves, as well as in trichomes.

The protein localises to the cell membrane. It localises to the cytoplasm. Its subcellular location is the cytoskeleton. May be involved in cooperative interactions with calmodulins or calmodulin-like proteins. Recruits calmodulin proteins to microtubules, thus being a potential scaffold in cellular signaling and trafficking. Regulates the formation of oval xylem secondary cell-wall deposition pits through microtubule-dependent lateral inhibition of Rho GTPase domains, thus confining the area of active ROP domains within the lattice of the cortical microtubules. May associate with nucleic acids and regulate gene expression at the transcriptional or post-transcriptional level. This is Protein IQ-DOMAIN 13 from Arabidopsis thaliana (Mouse-ear cress).